The chain runs to 368 residues: Methionine import ATP-binding protein MetN (368 aa).

The span at 1–14 (MASDAQPSVDQPSA) shows a compositional bias: polar residues. Positions 1–27 (MASDAQPSVDQPSAGTPGATGNSTGTT) are disordered. Over residues 15–27 (GTPGATGNSTGTT) the composition is skewed to low complexity. Residues 31 to 270 (IVFRDVTKIF…PQTKTAANFV (240 aa)) form the ABC transporter domain. Residue 67-74 (GYSGAGKS) participates in ATP binding.

The protein belongs to the ABC transporter superfamily. Methionine importer (TC 3.A.1.24) family. As to quaternary structure, the complex is composed of two ATP-binding proteins (MetN), two transmembrane proteins (MetI) and a solute-binding protein (MetQ).

It localises to the cell membrane. The catalysed reaction is L-methionine(out) + ATP + H2O = L-methionine(in) + ADP + phosphate + H(+). It carries out the reaction D-methionine(out) + ATP + H2O = D-methionine(in) + ADP + phosphate + H(+). Part of the ABC transporter complex MetNIQ involved in methionine import. Responsible for energy coupling to the transport system. This Corynebacterium jeikeium (strain K411) protein is Methionine import ATP-binding protein MetN.